The sequence spans 229 residues: Orotidine 5'-phosphate decarboxylase (229 aa).

Residues aspartate 11, lysine 33, 61–70 (DMKLFDISAT), threonine 116, arginine 179, glutamine 188, glycine 208, and arginine 209 contribute to the substrate site. The Proton donor role is filled by lysine 63.

It belongs to the OMP decarboxylase family. Type 1 subfamily. Homodimer.

The enzyme catalyses orotidine 5'-phosphate + H(+) = UMP + CO2. It functions in the pathway pyrimidine metabolism; UMP biosynthesis via de novo pathway; UMP from orotate: step 2/2. Its function is as follows. Catalyzes the decarboxylation of orotidine 5'-monophosphate (OMP) to uridine 5'-monophosphate (UMP). The polypeptide is Orotidine 5'-phosphate decarboxylase (Jannaschia sp. (strain CCS1)).